The sequence spans 382 residues: Galactokinase (382 aa).

34 to 37 (EHTD) is a substrate binding site. 124 to 130 (GAGLSSS) contributes to the ATP binding site. Mg(2+) contacts are provided by S130 and E162. D174 serves as the catalytic Proton acceptor. Position 223 (Y223) interacts with substrate.

Belongs to the GHMP kinase family. GalK subfamily.

It localises to the cytoplasm. The catalysed reaction is alpha-D-galactose + ATP = alpha-D-galactose 1-phosphate + ADP + H(+). Its pathway is carbohydrate metabolism; galactose metabolism. Functionally, catalyzes the transfer of the gamma-phosphate of ATP to D-galactose to form alpha-D-galactose-1-phosphate (Gal-1-P). The polypeptide is Galactokinase (Shigella dysenteriae serotype 1 (strain Sd197)).